A 458-amino-acid chain; its full sequence is Fasciclin-like arabinogalactan protein 17 (458 aa).

Positions 1–30 are cleaved as a signal peptide; the sequence is MDRRIYGGSAVIHLFLFFSVLIFSAASALS. An FAS1 1 domain is found at 43–184; that stretch reads NSNSVLVALL…GLIHGIERLL (142 aa). N-linked (GlcNAc...) asparagine glycosylation is present at N80. The segment at 207 to 262 is disordered; it reads PEGAPEVDPRTNRLKKPAAPVPAGSPPALPIQSAMAPGPSLAPAPAPGPGGKQHHF. Residues 225–235 are compositionally biased toward pro residues; sequence APVPAGSPPAL. The FAS1 2 domain occupies 268-411; it reads VKDFIHTLLH…ISVQGIDGVL (144 aa). The N-linked (GlcNAc...) asparagine glycan is linked to N290.

This sequence belongs to the fasciclin-like AGP family.

Its subcellular location is the secreted. In terms of biological role, may be a cell surface adhesion protein. This Arabidopsis thaliana (Mouse-ear cress) protein is Fasciclin-like arabinogalactan protein 17 (FLA17).